A 196-amino-acid polypeptide reads, in one-letter code: Lipoprotein signal peptidase (196 aa).

Helical transmembrane passes span 43 to 63, 75 to 95, and 100 to 120; these read LMLK…GISF, AVFI…MVCS, and GFAG…DRLF. Residues D126 and D144 contribute to the active site. The helical transmembrane segment at 135-155 threads the bilayer; it reads YSFPVFNLADCFITIGVIILI.

It belongs to the peptidase A8 family.

The protein localises to the cell inner membrane. It carries out the reaction Release of signal peptides from bacterial membrane prolipoproteins. Hydrolyzes -Xaa-Yaa-Zaa-|-(S,diacylglyceryl)Cys-, in which Xaa is hydrophobic (preferably Leu), and Yaa (Ala or Ser) and Zaa (Gly or Ala) have small, neutral side chains.. The protein operates within protein modification; lipoprotein biosynthesis (signal peptide cleavage). In terms of biological role, this protein specifically catalyzes the removal of signal peptides from prolipoproteins. This Rickettsia canadensis (strain McKiel) protein is Lipoprotein signal peptidase.